We begin with the raw amino-acid sequence, 446 residues long: Glucose-6-phosphate isomerase (446 aa).

The Proton donor role is filled by glutamate 287. Residues histidine 308 and lysine 422 contribute to the active site.

This sequence belongs to the GPI family.

Its subcellular location is the cytoplasm. The catalysed reaction is alpha-D-glucose 6-phosphate = beta-D-fructose 6-phosphate. The protein operates within carbohydrate biosynthesis; gluconeogenesis. It participates in carbohydrate degradation; glycolysis; D-glyceraldehyde 3-phosphate and glycerone phosphate from D-glucose: step 2/4. Catalyzes the reversible isomerization of glucose-6-phosphate to fructose-6-phosphate. The polypeptide is Glucose-6-phosphate isomerase (Lactobacillus helveticus (strain DPC 4571)).